Here is a 229-residue protein sequence, read N- to C-terminus: ATP synthase subunit a (229 aa).

6 helical membrane passes run 25-45 (ADAI…SILA), 82-102 (FFPL…IGLI), 111-131 (NINT…IVGI), 142-162 (FLGP…IGHF), 181-201 (LVLM…MMLM), and 202-222 (GVLV…IYIQ).

It belongs to the ATPase A chain family. F-type ATPases have 2 components, CF(1) - the catalytic core - and CF(0) - the membrane proton channel. CF(1) has five subunits: alpha(3), beta(3), gamma(1), delta(1), epsilon(1). CF(0) has three main subunits: a(1), b(2) and c(9-12). The alpha and beta chains form an alternating ring which encloses part of the gamma chain. CF(1) is attached to CF(0) by a central stalk formed by the gamma and epsilon chains, while a peripheral stalk is formed by the delta and b chains.

It is found in the cell inner membrane. Its function is as follows. Key component of the proton channel; it plays a direct role in the translocation of protons across the membrane. This is ATP synthase subunit a from Geotalea daltonii (strain DSM 22248 / JCM 15807 / FRC-32) (Geobacter daltonii).